Reading from the N-terminus, the 152-residue chain is Large ribosomal subunit protein bL9 (152 aa).

It belongs to the bacterial ribosomal protein bL9 family.

In terms of biological role, binds to the 23S rRNA. In Mycobacterium avium (strain 104), this protein is Large ribosomal subunit protein bL9.